A 239-amino-acid chain; its full sequence is DNA repair protein RecO (239 aa).

This sequence belongs to the RecO family.

Functionally, involved in DNA repair and RecF pathway recombination. This is DNA repair protein RecO from Aromatoleum aromaticum (strain DSM 19018 / LMG 30748 / EbN1) (Azoarcus sp. (strain EbN1)).